The sequence spans 228 residues: Probable septum site-determining protein MinC (228 aa).

The protein belongs to the MinC family. As to quaternary structure, interacts with MinD and FtsZ.

Its function is as follows. Cell division inhibitor that blocks the formation of polar Z ring septums. Rapidly oscillates between the poles of the cell to destabilize FtsZ filaments that have formed before they mature into polar Z rings. Prevents FtsZ polymerization. In Bacillus cereus (strain G9842), this protein is Probable septum site-determining protein MinC.